The chain runs to 528 residues: GMP synthase [glutamine-hydrolyzing] (528 aa).

The Glutamine amidotransferase type-1 domain occupies 13-203 (TVLVVDFGAQ…LYEAAGCRPT (191 aa)). The active-site Nucleophile is Cys-90. Active-site residues include His-177 and Glu-179. The GMPS ATP-PPase domain occupies 204–402 (WTMVNIVEDQ…LGLPAEMVWR (199 aa)). 231 to 237 (SGGVDSA) lines the ATP pocket.

As to quaternary structure, homodimer.

The enzyme catalyses XMP + L-glutamine + ATP + H2O = GMP + L-glutamate + AMP + diphosphate + 2 H(+). The protein operates within purine metabolism; GMP biosynthesis; GMP from XMP (L-Gln route): step 1/1. Catalyzes the synthesis of GMP from XMP. In Thermobifida fusca (strain YX), this protein is GMP synthase [glutamine-hydrolyzing].